Consider the following 187-residue polypeptide: Pyridoxal 5'-phosphate synthase subunit PdxT (187 aa).

Position 47–49 (47–49) interacts with L-glutamine; sequence GES. Catalysis depends on Cys-76, which acts as the Nucleophile. L-glutamine-binding positions include Arg-102 and 128–129; that span reads IR. Residues His-165 and Glu-167 each act as charge relay system in the active site.

The protein belongs to the glutaminase PdxT/SNO family. In terms of assembly, in the presence of PdxS, forms a dodecamer of heterodimers. Only shows activity in the heterodimer.

The catalysed reaction is aldehydo-D-ribose 5-phosphate + D-glyceraldehyde 3-phosphate + L-glutamine = pyridoxal 5'-phosphate + L-glutamate + phosphate + 3 H2O + H(+). The enzyme catalyses L-glutamine + H2O = L-glutamate + NH4(+). It participates in cofactor biosynthesis; pyridoxal 5'-phosphate biosynthesis. Functionally, catalyzes the hydrolysis of glutamine to glutamate and ammonia as part of the biosynthesis of pyridoxal 5'-phosphate. The resulting ammonia molecule is channeled to the active site of PdxS. The protein is Pyridoxal 5'-phosphate synthase subunit PdxT of Methanococcus maripaludis (strain DSM 14266 / JCM 13030 / NBRC 101832 / S2 / LL).